The following is a 46-amino-acid chain: Crambin (46 aa).

3 cysteine pairs are disulfide-bonded: C3/C40, C4/C32, and C16/C26.

Belongs to the plant thionin (TC 1.C.44) family.

The protein resides in the secreted. In terms of biological role, the function of this hydrophobic plant seed protein is not known. This Crambe hispanica subsp. abyssinica (Abyssinian kale) protein is Crambin (THI2).